The primary structure comprises 483 residues: Docking protein 1 (483 aa).

The residue at position 1 (methionine 1) is an N-acetylmethionine. The PH domain maps to 4 to 119 (AVMEGPLFLQ…WVQTLCQNAF (116 aa)). Serine 48 is subject to Phosphoserine. An IRS-type PTB domain is found at 151–259 (EGSQFWVTVQ…HRQKIQGKAG (109 aa)). Residues serine 269 and serine 291 each carry the phosphoserine modification. Residues 293–326 (PALYSEPLDSLRIPPGPSQDSLYSDPLDSTPARA) are disordered. Phosphotyrosine is present on residues tyrosine 296, tyrosine 337, tyrosine 362, tyrosine 377, tyrosine 398, and tyrosine 409. The tract at residues 409–483 (YAVPPPRSTK…RTGAKSEGST (75 aa)) is disordered. Positions 411–424 (VPPPRSTKPFPAPK) are enriched in pro residues. Serine 416 carries the phosphoserine modification. Residues 434 to 460 (GAATGSGSQGHSSDTALYSQVQKSGAS) show a composition bias toward polar residues. Tyrosine 451 is subject to Phosphotyrosine. Serine 462 is subject to Phosphoserine.

It belongs to the DOK family. Type A subfamily. As to quaternary structure, interacts with RasGAP, INPP5D/SHIP1 and ABL1. Interacts directly with phosphorylated ITGB3. Interacts with SRMS (via the SH2 and SH3 domains). Constitutively tyrosine-phosphorylated. Phosphorylated by TEC. Phosphorylated by LYN. Phosphorylated on tyrosine residues by the insulin receptor kinase. Results in the negative regulation of the insulin signaling pathway. Phosphorylated on tyrosine residues by SRMS.

The protein localises to the cytoplasm. The protein resides in the nucleus. Its function is as follows. DOK proteins are enzymatically inert adaptor or scaffolding proteins. They provide a docking platform for the assembly of multimolecular signaling complexes. DOK1 appears to be a negative regulator of the insulin signaling pathway. Modulates integrin activation by competing with talin for the same binding site on ITGB3. The sequence is that of Docking protein 1 (DOK1) from Bos taurus (Bovine).